The following is a 134-amino-acid chain: T-cell receptor alpha chain V region RL-5 (134 aa).

Positions 1-20 (MFSASCSVTVVVLLITVRRT) are cleaved as a signal peptide. The tract at residues 21 to 114 (NGASVTQTEG…DSAVYYCALR (94 aa)) is v segment. Residues 115–134 (RGASNKLTLGTGTLLKVELN) form a j segment region. Asn-134 carries N-linked (GlcNAc...) asparagine glycosylation.

In terms of processing, rearrangement with the C region would elongate the sequence with Ile-Thr-; which creates a potential N-glycosylation site at Asn-134.

In Oryctolagus cuniculus (Rabbit), this protein is T-cell receptor alpha chain V region RL-5.